Reading from the N-terminus, the 206-residue chain is Probable chemoreceptor glutamine deamidase CheD (206 aa).

This sequence belongs to the CheD family.

The enzyme catalyses L-glutaminyl-[protein] + H2O = L-glutamyl-[protein] + NH4(+). Its function is as follows. Probably deamidates glutamine residues to glutamate on methyl-accepting chemotaxis receptors (MCPs), playing an important role in chemotaxis. This chain is Probable chemoreceptor glutamine deamidase CheD, found in Laribacter hongkongensis (strain HLHK9).